We begin with the raw amino-acid sequence, 525 residues long: Cytochrome P450 750A1 (525 aa).

The chain crosses the membrane as a helical span at residues 13 to 33; that stretch reads PLPLPAILIATFIFFFSCWIL. Cysteine 465 contributes to the heme binding site.

Belongs to the cytochrome P450 family. Heme serves as cofactor.

It is found in the membrane. The chain is Cytochrome P450 750A1 (CYP750A1) from Pinus taeda (Loblolly pine).